A 276-amino-acid polypeptide reads, in one-letter code: uncharacterized protein (276 aa).

Positions 20–137 constitute an AB hydrolase-1 domain; it reads PVLIFIPGAN…PPINTFLPDS (118 aa). Positions 57 to 76 are disordered; the sequence is GESELTEPLPDSASNPDSDY.

The protein belongs to the AB hydrolase superfamily.

This is an uncharacterized protein from Staphylococcus aureus (strain bovine RF122 / ET3-1).